The chain runs to 754 residues: Probable galactinol--sucrose galactosyltransferase 1 (754 aa).

Belongs to the glycosyl hydrolases 36 family.

The enzyme catalyses alpha-D-galactosyl-(1-&gt;3)-1D-myo-inositol + sucrose = raffinose + myo-inositol. Transglycosidase operating by a ping-pong reaction mechanism. Involved in the synthesis of raffinose, a major soluble carbohydrate in seeds, roots and tubers. In Arabidopsis thaliana (Mouse-ear cress), this protein is Probable galactinol--sucrose galactosyltransferase 1 (RFS1).